We begin with the raw amino-acid sequence, 396 residues long: MAKAKFERTKPHVNIGTIGHVDHGKTTTTAAITKVLADAYPELNEAFAFDAIDKAPEEKERGITINISHVEYQTEKRHYAHVDAPGHADYIKNMITGAAQMDGAILVVAATDGPMPQTREHVLLARQVGVPYILVALNKCDMVDDEEIIELVEMEVRELLAEQDYDEDAPIVHISALKALEGDEKWAGQILELMQACDDNIPDPVRETDKPFLMPIEDIFTITGRGTVVTGRVERGTLNVNDDVEIIGIKEKATQTTVTGIEMFRKLLDSAEAGDNCGLLLRGIKREDVERGQVVVKPGAYTPHTEFEGSVYVLSKDEGGRHTPFFDNYRPQFYFRTTDVTGVVKLPEGVEMVMPGDNVDMSVTLIQPVAMDEGLRFAIREGSRTVGAGRVTKIIK.

The tr-type G domain occupies 10 to 205 (KPHVNIGTIG…ACDDNIPDPV (196 aa)). A G1 region spans residues 19-26 (GHVDHGKT). 19–26 (GHVDHGKT) contributes to the GTP binding site. Residue T26 coordinates Mg(2+). The interval 62–66 (GITIN) is G2. The interval 83-86 (DAPG) is G3. Residues 83–87 (DAPGH) and 138–141 (NKCD) each bind GTP. The interval 138–141 (NKCD) is G4. The G5 stretch occupies residues 175–177 (SAL).

Belongs to the TRAFAC class translation factor GTPase superfamily. Classic translation factor GTPase family. EF-Tu/EF-1A subfamily. In terms of assembly, monomer.

The protein resides in the cytoplasm. It catalyses the reaction GTP + H2O = GDP + phosphate + H(+). GTP hydrolase that promotes the GTP-dependent binding of aminoacyl-tRNA to the A-site of ribosomes during protein biosynthesis. This Corynebacterium efficiens (strain DSM 44549 / YS-314 / AJ 12310 / JCM 11189 / NBRC 100395) protein is Elongation factor Tu.